A 1228-amino-acid polypeptide reads, in one-letter code: MTQDKSIEPFFLNKVVDKSQLRQLIIWAFRNYGIARASNMADTLKDLGFLYATKAGISLSLEDLRIPPAKNNLLKTTIDLINDTDTKYRKGEITAVERFQKVIDTWNSASDTLKKQVIKYFTEKDPLNSIYMMAFSGARANISQVRQLVGMRGLMADPQGQIIDLPISSNFREGLTITDYFISSYGARKGLVDTALRTADSGYLTRRLVDVAQDVIIREADCNTSKGIVLESMIDNRKTLVSLHQALIGRVLAEDLFNPAGSKLVAKLNTEISPDLANEIISLGISSVLVRSPITCESIKSVCQSCYGWNLAHGRIVDLGEAVGIIAAQSIGEPGTQLTMRTFHTGGVFTGELAQTVISSSDCQVEYPSNIILSDTRTRHGDHAFLVEKDIKLKLLDFNKKQTSLSLVKGSLLFVKHLEYITSGQVIAEYPISNRLITEKAQKAVLADFSGSIYLMDLSVSNIQSEQQTFKNVIKGGVIWILAGHVFSIPYNTQLIISENDFIDENHLIGKTEFVSRYEGRVRILKKKQDFIQDIVIITSSKTYINIDVLTKFYNGYTNHFLITNQQDKFILKTLPNQTIVDQQLIAELITNIYRTNTGGIIKYLDLSVSDKKVDLNSKKDYYDIVDGGYVLWIGEETHEINKDISLLLVSHGQLIDEGTEIVKNIFTNSSGIVDIIQKEGIVREIIIKPGILYPHSKFYDHKSKSRGFLKPGEIISNDLKTDKLVYWEYFYVKNQSYTLIRPVIVYSIPSKTIQFKYSADSFNSHICSLKLVKRIYFRDGERVKSVSGIDIVKTYLIAELNKDSLNLKCTLQLNLDSNNRSISRMRIVTMDKLSLKDENNIASTKDLYTRTRLLVTNNQYIKSGTVVAQTELFSSLEGQVVSIQKNKSSNPRILLITSLDTKVFSINNNQNIKVNINDLIYAGDEIATNIISYISGQVISIRDNQITVRLGQPYLISEGSFLHVNNQALIQRGENIATLIFERVKTGDIVQGLPRIEEILEARKKSDSFFNPHVVLDSKFRQYVNQGLNLYDATRLSLLILQLYLVKELQLVYQSQGVEIADKHIEVIVRQMTSKVKIENGGDTDHLPGEIIELQKIEMLNKALRLASKEEALYYPILLGITKASLNTESFISAASFQETTKVLTDAAISCKLDWLRGLKENVIIGRLIPAGTGFNIYNNMQLNYQDEKYSYTKNLLSLPQNTKNLNFEDIIVDDRNAHMYSRNNNL.

Zn(2+)-binding residues include Cys-222, Cys-296, Cys-303, and Cys-306.

It belongs to the RNA polymerase beta' chain family. RpoC2 subfamily. As to quaternary structure, in plastids the minimal PEP RNA polymerase catalytic core is composed of four subunits: alpha, beta, beta', and beta''. When a (nuclear-encoded) sigma factor is associated with the core the holoenzyme is formed, which can initiate transcription. It depends on Zn(2+) as a cofactor.

The protein resides in the plastid. The protein localises to the chloroplast. The catalysed reaction is RNA(n) + a ribonucleoside 5'-triphosphate = RNA(n+1) + diphosphate. Functionally, DNA-dependent RNA polymerase catalyzes the transcription of DNA into RNA using the four ribonucleoside triphosphates as substrates. The protein is DNA-directed RNA polymerase subunit beta'' of Gracilaria tenuistipitata var. liui (Red alga).